We begin with the raw amino-acid sequence, 503 residues long: Ribose import ATP-binding protein RbsA 1 (503 aa).

ABC transporter domains are found at residues 5 to 241 and 253 to 495; these read IALE…VGRA and IGQP…AGIE. 37–44 contacts ATP; the sequence is GENGAGKS.

Belongs to the ABC transporter superfamily. Ribose importer (TC 3.A.1.2.1) family. In terms of assembly, the complex is composed of an ATP-binding protein (RbsA), two transmembrane proteins (RbsC) and a solute-binding protein (RbsB).

The protein localises to the cell inner membrane. The catalysed reaction is D-ribose(out) + ATP + H2O = D-ribose(in) + ADP + phosphate + H(+). In terms of biological role, part of the ABC transporter complex RbsABC involved in ribose import. Responsible for energy coupling to the transport system. The sequence is that of Ribose import ATP-binding protein RbsA 1 from Rhizobium meliloti (strain 1021) (Ensifer meliloti).